The primary structure comprises 612 residues: Dihydroxy-acid dehydratase (612 aa).

Asp81 is a Mg(2+) binding site. Cys122 lines the [2Fe-2S] cluster pocket. Residues Asp123 and Lys124 each coordinate Mg(2+). Lys124 carries the post-translational modification N6-carboxylysine. Cys193 is a [2Fe-2S] cluster binding site. Glu489 provides a ligand contact to Mg(2+). Residue Ser515 is the Proton acceptor of the active site.

The protein belongs to the IlvD/Edd family. In terms of assembly, homodimer. [2Fe-2S] cluster serves as cofactor. Requires Mg(2+) as cofactor.

It catalyses the reaction (2R)-2,3-dihydroxy-3-methylbutanoate = 3-methyl-2-oxobutanoate + H2O. The enzyme catalyses (2R,3R)-2,3-dihydroxy-3-methylpentanoate = (S)-3-methyl-2-oxopentanoate + H2O. It participates in amino-acid biosynthesis; L-isoleucine biosynthesis; L-isoleucine from 2-oxobutanoate: step 3/4. Its pathway is amino-acid biosynthesis; L-valine biosynthesis; L-valine from pyruvate: step 3/4. In terms of biological role, functions in the biosynthesis of branched-chain amino acids. Catalyzes the dehydration of (2R,3R)-2,3-dihydroxy-3-methylpentanoate (2,3-dihydroxy-3-methylvalerate) into 2-oxo-3-methylpentanoate (2-oxo-3-methylvalerate) and of (2R)-2,3-dihydroxy-3-methylbutanoate (2,3-dihydroxyisovalerate) into 2-oxo-3-methylbutanoate (2-oxoisovalerate), the penultimate precursor to L-isoleucine and L-valine, respectively. This Stenotrophomonas maltophilia (strain K279a) protein is Dihydroxy-acid dehydratase.